A 161-amino-acid chain; its full sequence is Zinc finger protein KNUCKLES (161 aa).

The interval M1 to A33 is disordered. The C2H2-type zinc finger occupies F38 to H60. The tract at residues G142–L161 is disordered. Positions L155 to L159 match the EAR-like (transcriptional repression) motif.

First expressed in developing carpel primordia, and later in stamens and ovules of flower buds.

Its subcellular location is the nucleus. Functionally, may function as a transcriptional repressor of cellular proliferation that regulates floral determinacy and relative size of basal pattern elements along the proximo-distal axis of the developing gynoecium. In Arabidopsis thaliana (Mouse-ear cress), this protein is Zinc finger protein KNUCKLES (KNU).